A 357-amino-acid polypeptide reads, in one-letter code: U5 small nuclear ribonucleoprotein 40 kDa protein (357 aa).

Lys-18 is covalently cross-linked (Glycyl lysine isopeptide (Lys-Gly) (interchain with G-Cter in SUMO2)). An Asymmetric dimethylarginine modification is found at Arg-21. WD repeat units lie at residues 64–103, 107–146, 149–189, 191–230, 233–272, 283–322, and 325–357; these read GHEG…DNYA, GHSG…RVKR, GHTS…AIQT, QNTY…LTYT, GHAD…PKER, NFEK…ILYK, and GHAG…GEIQ. Lys-270 is covalently cross-linked (Glycyl lysine isopeptide (Lys-Gly) (interchain with G-Cter in SUMO2)).

As to quaternary structure, component of the pre-catalytic and catalytic spliceosome complexes. Component of the postcatalytic spliceosome P complex. Part of the U5 snRNP complex. Interacts with PRPF8. Component of the U4/U6-U5 tri-snRNP complex composed of the U4, U6 and U5 snRNAs and at least PRPF3, PRPF4, PRPF6, PRPF8, PRPF31, SNRNP200, TXNL4A, WDR57, SNRNP40, DDX23, CD2BP2, PPIH, SNU13, EFTUD2, SART1 and USP39. Component of the minor spliceosome, which splices U12-type introns.

The protein localises to the nucleus. Its function is as follows. Required for pre-mRNA splicing as component of the activated spliceosome. Component of the U5 small nuclear ribonucleoprotein (snRNP) complex and the U4/U6-U5 tri-snRNP complex, building blocks of the spliceosome. As a component of the minor spliceosome, involved in the splicing of U12-type introns in pre-mRNAs. The sequence is that of U5 small nuclear ribonucleoprotein 40 kDa protein (SNRNP40) from Homo sapiens (Human).